The chain runs to 175 residues: Large ribosomal subunit protein uL10 (175 aa).

It belongs to the universal ribosomal protein uL10 family. In terms of assembly, part of the ribosomal stalk of the 50S ribosomal subunit. The N-terminus interacts with L11 and the large rRNA to form the base of the stalk. The C-terminus forms an elongated spine to which L12 dimers bind in a sequential fashion forming a multimeric L10(L12)X complex.

Forms part of the ribosomal stalk, playing a central role in the interaction of the ribosome with GTP-bound translation factors. This is Large ribosomal subunit protein uL10 from Desulfotalea psychrophila (strain LSv54 / DSM 12343).